The sequence spans 229 residues: Germin-like protein 12-2 (229 aa).

The first 22 residues, Met1 to Ala22, serve as a signal peptide directing secretion. Residues Cys32 and Cys47 are joined by a disulfide bond. In terms of domain architecture, Cupin type-1 spans Ala62–Asp217. Asn78 carries an N-linked (GlcNAc...) asparagine glycan. Mn(2+)-binding residues include His111, His113, Glu118, and His162.

The protein belongs to the germin family. As to quaternary structure, oligomer (believed to be a pentamer but probably hexamer).

It localises to the secreted. The protein resides in the extracellular space. Its subcellular location is the apoplast. Functionally, may play a role in plant defense. Probably has no oxalate oxidase activity even if the active site is conserved. The sequence is that of Germin-like protein 12-2 from Oryza sativa subsp. japonica (Rice).